Reading from the N-terminus, the 269-residue chain is Chromosome-partitioning protein Spo0J (269 aa).

The segment at 1-20 (MSRKPSGLGRGLEALLPKTG) is stimulates ATPase activity of Soj by 8%. The segment at residues 137 to 156 (QEEVARRVGKARSTVANALR) is a DNA-binding region (H-T-H motif). The segment at 223 to 269 (PSPLSLELSRHLGLPVRVVGGKKGKVVIQYRSLEELEALLRRLGYQA) is required for DNA-binding; may be responsible for dimerization.

This sequence belongs to the ParB family. Homodimer, probably via the C-terminal 46 residues. Dimerization of the N-terminal H-T-H region may require DNA-binding. Probably interacts with ATPase Soj.

Functionally, probably involved in chromosome partitioning. Binds to a plasmid centromere-like site parS. Stimulates the ATPase activity 10-fold of Soj; the first 20 residues may be responsible. The protein is Chromosome-partitioning protein Spo0J (spo0C) of Thermus thermophilus (strain ATCC BAA-163 / DSM 7039 / HB27).